The chain runs to 343 residues: Heat-inducible transcription repressor HrcA (343 aa).

The protein belongs to the HrcA family.

Functionally, negative regulator of class I heat shock genes (grpE-dnaK-dnaJ and groELS operons). Prevents heat-shock induction of these operons. The sequence is that of Heat-inducible transcription repressor HrcA from Bacillus licheniformis (strain ATCC 14580 / DSM 13 / JCM 2505 / CCUG 7422 / NBRC 12200 / NCIMB 9375 / NCTC 10341 / NRRL NRS-1264 / Gibson 46).